The following is a 291-amino-acid chain: Pituitary-specific positive transcription factor 1 (291 aa).

The short motif at 5-13 (SFTSADTFI) is the 9aaTAD element. In terms of domain architecture, POU-specific spans 124–198 (MDSPEIRELE…ILSKWLEEAE (75 aa)). The homeobox DNA-binding region spans 214-273 (KRKRRTTISVAAKDALERHFGEHSKPSSQEIMRMAEELNLEKEVVRVWFCNRRQREKRVK).

The protein belongs to the POU transcription factor family. Class-1 subfamily. As to quaternary structure, interacts with PITX1. Interacts with LHX3. Interacts with ELK1.

It is found in the nucleus. Functionally, transcription factor involved in the specification of the lactotrope, somatotrope, and thyrotrope phenotypes in the developing anterior pituitary. Activates growth hormone and prolactin genes. Specifically binds to the consensus sequence 5'-TAAAT-3'. The chain is Pituitary-specific positive transcription factor 1 (Pou1f1) from Mus musculus (Mouse).